Here is a 259-residue protein sequence, read N- to C-terminus: UPF0246 protein PA14_18590 (259 aa).

Belongs to the UPF0246 family.

In Pseudomonas aeruginosa (strain UCBPP-PA14), this protein is UPF0246 protein PA14_18590.